Here is a 671-residue protein sequence, read N- to C-terminus: NADPH--cytochrome P450 reductase (671 aa).

Residues 1 to 14 lie on the Lumenal side of the membrane; that stretch reads MSAEHVEEVVSEEP. A helical membrane pass occupies residues 15–35; sequence FLGTLDIALLVVLLVGATWYF. At 36 to 671 the chain is on the cytoplasmic side; sequence MRSRKKEEAP…QKRYSADVWS (636 aa). One can recognise a Flavodoxin-like domain in the interval 77–221; it reads LVVFYGSQTG…DFITWKDRFW (145 aa). FMN contacts are provided by residues 83-88, 135-138, 170-179, and D205; these read SQTGTA, ATYG, and LGNKTYEHYN. Residues 276 to 515 form the FAD-binding FR-type domain; it reads KNPFLASVIV…FIRKSQFRLP (240 aa). R295 is a binding site for NADP(+). FAD is bound by residues 451-454, 469-471, Y475, and 485-488; these read RYYS, TAV, and GVAT. Residues T529, 589–590, 595–599, and D632 each bind NADP(+); these read SR and KIYVT. W670 contributes to the FAD binding site.

Belongs to the NADPH--cytochrome P450 reductase family. This sequence in the N-terminal section; belongs to the flavodoxin family. It in the C-terminal section; belongs to the flavoprotein pyridine nucleotide cytochrome reductase family. Requires FAD as cofactor. It depends on FMN as a cofactor.

The protein localises to the endoplasmic reticulum membrane. The catalysed reaction is 2 oxidized [cytochrome P450] + NADPH = 2 reduced [cytochrome P450] + NADP(+) + H(+). Functionally, this enzyme is required for electron transfer from NADP to cytochrome P450 in microsomes. It can also provide electron transfer to heme oxygenase and cytochrome B5. The chain is NADPH--cytochrome P450 reductase from Musca domestica (House fly).